The primary structure comprises 324 residues: Glyoxylate/hydroxypyruvate reductase B (324 aa).

Active-site residues include Arg237 and Glu266. Residue His285 is the Proton donor of the active site.

It belongs to the D-isomer specific 2-hydroxyacid dehydrogenase family. GhrB subfamily. Homodimer.

The protein resides in the cytoplasm. The catalysed reaction is glycolate + NADP(+) = glyoxylate + NADPH + H(+). The enzyme catalyses (R)-glycerate + NAD(+) = 3-hydroxypyruvate + NADH + H(+). It catalyses the reaction (R)-glycerate + NADP(+) = 3-hydroxypyruvate + NADPH + H(+). Catalyzes the NADPH-dependent reduction of glyoxylate and hydroxypyruvate into glycolate and glycerate, respectively. The protein is Glyoxylate/hydroxypyruvate reductase B of Enterobacter sp. (strain 638).